Consider the following 370-residue polypeptide: Aminomethyltransferase (370 aa).

The protein belongs to the GcvT family. In terms of assembly, the glycine cleavage system is composed of four proteins: P, T, L and H.

The catalysed reaction is N(6)-[(R)-S(8)-aminomethyldihydrolipoyl]-L-lysyl-[protein] + (6S)-5,6,7,8-tetrahydrofolate = N(6)-[(R)-dihydrolipoyl]-L-lysyl-[protein] + (6R)-5,10-methylene-5,6,7,8-tetrahydrofolate + NH4(+). Its function is as follows. The glycine cleavage system catalyzes the degradation of glycine. This chain is Aminomethyltransferase, found in Clostridium botulinum (strain Loch Maree / Type A3).